The chain runs to 352 residues: UDP-N-acetylglucosamine--N-acetylmuramyl-(pentapeptide) pyrophosphoryl-undecaprenol N-acetylglucosamine transferase (352 aa).

UDP-N-acetyl-alpha-D-glucosamine is bound by residues 13-15, N125, R161, S189, I242, 261-266, and Q286; these read TGG and ALTVSE.

This sequence belongs to the glycosyltransferase 28 family. MurG subfamily.

It localises to the cell inner membrane. The catalysed reaction is di-trans,octa-cis-undecaprenyl diphospho-N-acetyl-alpha-D-muramoyl-L-alanyl-D-glutamyl-meso-2,6-diaminopimeloyl-D-alanyl-D-alanine + UDP-N-acetyl-alpha-D-glucosamine = di-trans,octa-cis-undecaprenyl diphospho-[N-acetyl-alpha-D-glucosaminyl-(1-&gt;4)]-N-acetyl-alpha-D-muramoyl-L-alanyl-D-glutamyl-meso-2,6-diaminopimeloyl-D-alanyl-D-alanine + UDP + H(+). It functions in the pathway cell wall biogenesis; peptidoglycan biosynthesis. In terms of biological role, cell wall formation. Catalyzes the transfer of a GlcNAc subunit on undecaprenyl-pyrophosphoryl-MurNAc-pentapeptide (lipid intermediate I) to form undecaprenyl-pyrophosphoryl-MurNAc-(pentapeptide)GlcNAc (lipid intermediate II). The protein is UDP-N-acetylglucosamine--N-acetylmuramyl-(pentapeptide) pyrophosphoryl-undecaprenol N-acetylglucosamine transferase of Erwinia tasmaniensis (strain DSM 17950 / CFBP 7177 / CIP 109463 / NCPPB 4357 / Et1/99).